A 273-amino-acid polypeptide reads, in one-letter code: Dermonecrotic toxin LdSicTox-alphaIB3aii (273 aa).

The active site involves His5. Mg(2+) is bound by residues Glu25 and Asp27. The Nucleophile role is filled by His41. Intrachain disulfides connect Cys45/Cys51 and Cys47/Cys190. Residue Asp85 participates in Mg(2+) binding.

Belongs to the arthropod phospholipase D family. Class II subfamily. Mg(2+) serves as cofactor. In terms of tissue distribution, expressed by the venom gland.

The protein localises to the secreted. It carries out the reaction an N-(acyl)-sphingosylphosphocholine = an N-(acyl)-sphingosyl-1,3-cyclic phosphate + choline. It catalyses the reaction an N-(acyl)-sphingosylphosphoethanolamine = an N-(acyl)-sphingosyl-1,3-cyclic phosphate + ethanolamine. The catalysed reaction is a 1-acyl-sn-glycero-3-phosphocholine = a 1-acyl-sn-glycero-2,3-cyclic phosphate + choline. The enzyme catalyses a 1-acyl-sn-glycero-3-phosphoethanolamine = a 1-acyl-sn-glycero-2,3-cyclic phosphate + ethanolamine. Dermonecrotic toxins cleave the phosphodiester linkage between the phosphate and headgroup of certain phospholipids (sphingolipid and lysolipid substrates), forming an alcohol (often choline) and a cyclic phosphate. This toxin acts on sphingomyelin (SM). It may also act on ceramide phosphoethanolamine (CPE), lysophosphatidylcholine (LPC) and lysophosphatidylethanolamine (LPE), but not on lysophosphatidylserine (LPS), and lysophosphatidylglycerol (LPG). It acts by transphosphatidylation, releasing exclusively cyclic phosphate products as second products. Induces dermonecrosis, hemolysis, increased vascular permeability, edema, inflammatory response, and platelet aggregation. This is Dermonecrotic toxin LdSicTox-alphaIB3aii from Loxosceles deserta (Desert recluse spider).